The chain runs to 436 residues: Anhydro-N-acetylmuramic acid kinase (436 aa).

ATP is bound at residue 32–39; sequence GTSLDGMD.

This sequence belongs to the anhydro-N-acetylmuramic acid kinase family.

It catalyses the reaction 1,6-anhydro-N-acetyl-beta-muramate + ATP + H2O = N-acetyl-D-muramate 6-phosphate + ADP + H(+). It participates in amino-sugar metabolism; 1,6-anhydro-N-acetylmuramate degradation. Its pathway is cell wall biogenesis; peptidoglycan recycling. Functionally, catalyzes the specific phosphorylation of 1,6-anhydro-N-acetylmuramic acid (anhMurNAc) with the simultaneous cleavage of the 1,6-anhydro ring, generating MurNAc-6-P. Is required for the utilization of anhMurNAc either imported from the medium or derived from its own cell wall murein, and thus plays a role in cell wall recycling. This Psychrobacter arcticus (strain DSM 17307 / VKM B-2377 / 273-4) protein is Anhydro-N-acetylmuramic acid kinase.